The primary structure comprises 216 residues: Pyrophosphatase PpaX (216 aa).

Residue Asp9 is the Nucleophile of the active site.

The protein belongs to the HAD-like hydrolase superfamily. PpaX family. It depends on Mg(2+) as a cofactor.

It catalyses the reaction diphosphate + H2O = 2 phosphate + H(+). Its function is as follows. Hydrolyzes pyrophosphate formed during P-Ser-HPr dephosphorylation by HPrK/P. Might play a role in controlling the intracellular pyrophosphate pool. The sequence is that of Pyrophosphatase PpaX from Bacillus cereus (strain ATCC 10987 / NRS 248).